The following is a 169-amino-acid chain: Der GTPase-activating protein YihI (169 aa).

Disordered regions lie at residues Met-1 to Gly-75 and Gly-144 to Asn-169. The span at Ser-10–Lys-19 shows a compositional bias: basic residues. Residues Thr-20–Asp-30 are compositionally biased toward basic and acidic residues. The span at Arg-31–His-40 shows a compositional bias: basic residues. Polar residues predominate over residues Gly-49 to Gln-58. Residues Tyr-147–Gln-159 show a composition bias toward acidic residues. Positions Glu-160–Asn-169 are enriched in basic and acidic residues.

The protein belongs to the YihI family. Interacts with Der.

Its function is as follows. A GTPase-activating protein (GAP) that modifies Der/EngA GTPase function. May play a role in ribosome biogenesis. This Escherichia coli (strain 55989 / EAEC) protein is Der GTPase-activating protein YihI.